Consider the following 705-residue polypeptide: Frizzled-4 (705 aa).

An N-terminal signal peptide occupies residues 1–22; it reads MKPTCILCLLVVILLHPRISKS. Over residues 21-37 the composition is skewed to low complexity; the sequence is KSSTSGNPSASSSSSSP. The disordered stretch occupies residues 21–40; sequence KSSTSGNPSASSSSSSPPEI. The Extracellular portion of the chain corresponds to 23–233; the sequence is STSGNPSASS…FTPAEKHLAE (211 aa). One can recognise an FZ domain in the interval 41-163; the sequence is PAFRQCETIR…NNHETMCMEG (123 aa). 5 cysteine pairs are disulfide-bonded: Cys46–Cys107, Cys54–Cys100, Cys91–Cys130, Cys119–Cys160, and Cys123–Cys147. N-linked (GlcNAc...) asparagine glycosylation is present at Asn60. The chain crosses the membrane as a helical span at residues 234–254; that stretch reads IWVSTWAYAALGLALVATVCL. Topologically, residues 255 to 270 are cytoplasmic; that stretch reads LASDGSRLASAKWSRL. The helical transmembrane segment at 271–291 threads the bilayer; the sequence is LSPLIWCHNMVTLGWAVRFMV. The Extracellular segment spans residues 292–322; sequence GRTGTACGTDPQAPNESLLTVDGLSNASCAS. N-linked (GlcNAc...) asparagine glycans are attached at residues Asn306 and Asn317. A helical transmembrane segment spans residues 323 to 343; that stretch reads VFLMRYYFGMAACAWWAVLCL. Residues 344–386 lie on the Cytoplasmic side of the membrane; that stretch reads GWHRDIRRHSPDSKGHVVIPSNFGGSPAKRNSAKTAQQDLTQN. A helical membrane pass occupies residues 387-407; that stretch reads NFVCFVAWGLPAFQTSAVIVA. The Extracellular segment spans residues 408 to 430; it reads RFVDADELLGACFVGNQSDKALQ. A glycan (N-linked (GlcNAc...) asparagine) is linked at Asn423. Residues 431–451 form a helical membrane-spanning segment; sequence ILVATPVFCYWIFGSMNLISG. The Cytoplasmic portion of the chain corresponds to 452-483; the sequence is YLVHCRTKEILRNSNALSVQQQLQQLSAHSSS. Residues 484–504 traverse the membrane as a helical segment; it reads GIGIFLFIYGLACAMLLLAVI. Residues 505–529 lie on the Extracellular side of the membrane; that stretch reads YEFANIDVWLGSGDTNTPLWPFLLR. A helical transmembrane segment spans residues 530–550; it reads AFMELMLGICCFAWVLGPSIS. The Cytoplasmic portion of the chain corresponds to 551 to 705; it reads TLYKRQVSNG…LQQYGNETLL (155 aa). Residues 635 to 681 form a disordered region; it reads RSVHHQQRHSPHHHHHQQQQHHQFHPHHNHQHHSTSSHRLYYPPGSY. Basic residues predominate over residues 636 to 670; it reads SVHHQQRHSPHHHHHQQQQHHQFHPHHNHQHHSTS. The PDZ-binding motif lies at 703–705; that stretch reads TLL.

It belongs to the G-protein coupled receptor Fz/Smo family.

The protein resides in the membrane. In terms of biological role, receptor for Wnt proteins. Most of frizzled receptors are coupled to the beta-catenin canonical signaling pathway, which leads to the activation of disheveled proteins, inhibition of GSK-3 kinase, nuclear accumulation of beta-catenin and activation of Wnt target genes. A second signaling pathway involving PKC and calcium fluxes has been seen for some family members, but it is not yet clear if it represents a distinct pathway or if it can be integrated in the canonical pathway, as PKC seems to be required for Wnt-mediated inactivation of GSK-3 kinase. Both pathways seem to involve interactions with G-proteins. May be involved in transduction and intercellular transmission of polarity information during tissue morphogenesis and/or in differentiated tissues. Required to coordinate the cytoskeletons of epidermal cells to produce a parallel array of cuticular hairs and bristles. This chain is Frizzled-4 (fz4), found in Drosophila melanogaster (Fruit fly).